Consider the following 414-residue polypeptide: Gamma-glutamyl phosphate reductase (414 aa).

Belongs to the gamma-glutamyl phosphate reductase family.

Its subcellular location is the cytoplasm. The enzyme catalyses L-glutamate 5-semialdehyde + phosphate + NADP(+) = L-glutamyl 5-phosphate + NADPH + H(+). The protein operates within amino-acid biosynthesis; L-proline biosynthesis; L-glutamate 5-semialdehyde from L-glutamate: step 2/2. Functionally, catalyzes the NADPH-dependent reduction of L-glutamate 5-phosphate into L-glutamate 5-semialdehyde and phosphate. The product spontaneously undergoes cyclization to form 1-pyrroline-5-carboxylate. This chain is Gamma-glutamyl phosphate reductase, found in Xanthomonas oryzae pv. oryzae (strain MAFF 311018).